Reading from the N-terminus, the 303-residue chain is Sulfate adenylyltransferase subunit 2 (303 aa).

This sequence belongs to the PAPS reductase family. CysD subfamily. As to quaternary structure, heterodimer composed of CysD, the smaller subunit, and CysN.

It catalyses the reaction sulfate + ATP + H(+) = adenosine 5'-phosphosulfate + diphosphate. It functions in the pathway sulfur metabolism; hydrogen sulfide biosynthesis; sulfite from sulfate: step 1/3. Its function is as follows. With CysN forms the ATP sulfurylase (ATPS) that catalyzes the adenylation of sulfate producing adenosine 5'-phosphosulfate (APS) and diphosphate, the first enzymatic step in sulfur assimilation pathway. APS synthesis involves the formation of a high-energy phosphoric-sulfuric acid anhydride bond driven by GTP hydrolysis by CysN coupled to ATP hydrolysis by CysD. In Phocaeicola vulgatus (strain ATCC 8482 / DSM 1447 / JCM 5826 / CCUG 4940 / NBRC 14291 / NCTC 11154) (Bacteroides vulgatus), this protein is Sulfate adenylyltransferase subunit 2.